Reading from the N-terminus, the 343-residue chain is Flavone 3'-O-methyltransferase OMT1 (343 aa).

Asn107 lines the (E)-ferulate pocket. The S-adenosyl-L-homocysteine site is built by Gly184, Asp207, Asp227, Met228, Met240, and Lys241. The active-site Proton acceptor is the His245. Asp246 provides a ligand contact to (E)-5-hydroxyferulate. Catalysis depends on residues Glu273 and Glu305.

Belongs to the class I-like SAM-binding methyltransferase superfamily. Cation-independent O-methyltransferase family. COMT subfamily. As to quaternary structure, homodimer.

It carries out the reaction (E)-5-hydroxyferulate + S-adenosyl-L-methionine = (E)-sinapate + S-adenosyl-L-homocysteine + H(+). It catalyses the reaction luteolin + S-adenosyl-L-methionine = chrysoeriol + S-adenosyl-L-homocysteine + H(+). The catalysed reaction is quercetin + S-adenosyl-L-methionine = isorhamnetin + S-adenosyl-L-homocysteine + H(+). The enzyme catalyses (E)-caffeate + S-adenosyl-L-methionine = (E)-ferulate + S-adenosyl-L-homocysteine + H(+). It carries out the reaction a 3'-hydroxyflavone + S-adenosyl-L-methionine = a 3'-methoxyflavone + S-adenosyl-L-homocysteine + H(+). Its pathway is flavonoid metabolism. Catalyzes the 3'-O-methylation of the flavonoids luteolin and quercetin. Catalyzes the 3- of 5-O-methylation of the phenylpropanoids caffeate and 5-hydroxyferulate. Substrate preference is 5-hydroxyferulate &gt; luteolin &gt; quercetin &gt; caffeate. Apigenin, kempferol and 3,4-dimethylquercetin do not seem to be substrates for methylation. This Chrysosplenium americanum (American golden saxifrage) protein is Flavone 3'-O-methyltransferase OMT1.